We begin with the raw amino-acid sequence, 138 residues long: Large ribosomal subunit protein uL16 (138 aa).

It belongs to the universal ribosomal protein uL16 family. In terms of assembly, part of the 50S ribosomal subunit.

Its function is as follows. Binds 23S rRNA and is also seen to make contacts with the A and possibly P site tRNAs. The sequence is that of Large ribosomal subunit protein uL16 from Hyphomonas neptunium (strain ATCC 15444).